Consider the following 173-residue polypeptide: uncharacterized protein (173 aa).

The interval 80–107 (HSATVKRTDSSHRLKSHVVDKRPRRSLD) is disordered. Residues 85-107 (KRTDSSHRLKSHVVDKRPRRSLD) are compositionally biased toward basic and acidic residues.

This is an uncharacterized protein from Autographa californica nuclear polyhedrosis virus (AcMNPV).